The following is a 474-amino-acid chain: Bifunctional protein HldE (474 aa).

The interval 1–317 (MKLSMPRFDR…RRAVQREQGS (317 aa)) is ribokinase. 194–197 (NLAE) lines the ATP pocket. Residue Asp263 is part of the active site. The cytidylyltransferase stretch occupies residues 343–474 (FTNGCFDILH…GIVEKIRRQP (132 aa)).

The protein in the N-terminal section; belongs to the carbohydrate kinase PfkB family. This sequence in the C-terminal section; belongs to the cytidylyltransferase family. Homodimer.

The enzyme catalyses D-glycero-beta-D-manno-heptose 7-phosphate + ATP = D-glycero-beta-D-manno-heptose 1,7-bisphosphate + ADP + H(+). The catalysed reaction is D-glycero-beta-D-manno-heptose 1-phosphate + ATP + H(+) = ADP-D-glycero-beta-D-manno-heptose + diphosphate. It participates in nucleotide-sugar biosynthesis; ADP-L-glycero-beta-D-manno-heptose biosynthesis; ADP-L-glycero-beta-D-manno-heptose from D-glycero-beta-D-manno-heptose 7-phosphate: step 1/4. Its pathway is nucleotide-sugar biosynthesis; ADP-L-glycero-beta-D-manno-heptose biosynthesis; ADP-L-glycero-beta-D-manno-heptose from D-glycero-beta-D-manno-heptose 7-phosphate: step 3/4. Catalyzes the phosphorylation of D-glycero-D-manno-heptose 7-phosphate at the C-1 position to selectively form D-glycero-beta-D-manno-heptose-1,7-bisphosphate. Its function is as follows. Catalyzes the ADP transfer from ATP to D-glycero-beta-D-manno-heptose 1-phosphate, yielding ADP-D-glycero-beta-D-manno-heptose. In Azotobacter vinelandii (strain DJ / ATCC BAA-1303), this protein is Bifunctional protein HldE.